Reading from the N-terminus, the 344-residue chain is Uroporphyrinogen decarboxylase (344 aa).

Residues 26-30, Asp76, Tyr152, Ser207, and His323 each bind substrate; that span reads RQAGR.

This sequence belongs to the uroporphyrinogen decarboxylase family. As to quaternary structure, homodimer.

It is found in the cytoplasm. The catalysed reaction is uroporphyrinogen III + 4 H(+) = coproporphyrinogen III + 4 CO2. It participates in porphyrin-containing compound metabolism; protoporphyrin-IX biosynthesis; coproporphyrinogen-III from 5-aminolevulinate: step 4/4. Its function is as follows. Catalyzes the decarboxylation of four acetate groups of uroporphyrinogen-III to yield coproporphyrinogen-III. This is Uroporphyrinogen decarboxylase from Hyphomonas neptunium (strain ATCC 15444).